Here is a 487-residue protein sequence, read N- to C-terminus: Betaine aldehyde dehydrogenase 1 (487 aa).

S26, I27, and D93 together coordinate K(+). 150-152 contacts NAD(+); the sequence is GAW. The Charge relay system role is filled by K162. NAD(+)-binding positions include 176 to 179 and 229 to 232; these read KPSE and SVPT. L244 is a binding site for K(+). E250 serves as the catalytic Proton acceptor. Positions 252, 284, and 384 each coordinate NAD(+). C284 (nucleophile) is an active-site residue. C284 carries the cysteine sulfenic acid (-SOH) modification. K(+) contacts are provided by K454 and G457. The active-site Charge relay system is E461.

The protein belongs to the aldehyde dehydrogenase family. As to quaternary structure, dimer of dimers. It depends on K(+) as a cofactor.

It catalyses the reaction betaine aldehyde + NAD(+) + H2O = glycine betaine + NADH + 2 H(+). It functions in the pathway amine and polyamine biosynthesis; betaine biosynthesis via choline pathway; betaine from betaine aldehyde: step 1/1. Involved in the biosynthesis of the osmoprotectant glycine betaine. Catalyzes the irreversible oxidation of betaine aldehyde to the corresponding acid. This chain is Betaine aldehyde dehydrogenase 1, found in Rhizobium meliloti (strain 1021) (Ensifer meliloti).